Reading from the N-terminus, the 87-residue chain is Putative regulatory protein syc0519_c (87 aa).

This sequence belongs to the RemA family.

The polypeptide is Putative regulatory protein syc0519_c (Synechococcus sp. (strain ATCC 27144 / PCC 6301 / SAUG 1402/1) (Anacystis nidulans)).